Here is a 106-residue protein sequence, read N- to C-terminus: Thiosulfate sulfurtransferase GlpE (106 aa).

The Rhodanese domain occupies 17-105 (SRGEARLVDI…WHRASLPVEA (89 aa)). The Cysteine persulfide intermediate role is filled by cysteine 65.

The protein belongs to the GlpE family.

The protein resides in the cytoplasm. The catalysed reaction is thiosulfate + hydrogen cyanide = thiocyanate + sulfite + 2 H(+). It carries out the reaction thiosulfate + [thioredoxin]-dithiol = [thioredoxin]-disulfide + hydrogen sulfide + sulfite + 2 H(+). Transferase that catalyzes the transfer of sulfur from thiosulfate to thiophilic acceptors such as cyanide or dithiols. May function in a CysM-independent thiosulfate assimilation pathway by catalyzing the conversion of thiosulfate to sulfite, which can then be used for L-cysteine biosynthesis. The protein is Thiosulfate sulfurtransferase GlpE of Vibrio vulnificus (strain CMCP6).